The sequence spans 232 residues: 5'-methylthioadenosine/S-adenosylhomocysteine nucleosidase (232 aa).

The Proton acceptor role is filled by Glu-12. Substrate-binding positions include Gly-78, Val-153, and 174–175; that span reads ME. Residue Asp-198 is the Proton donor of the active site.

It belongs to the PNP/UDP phosphorylase family. MtnN subfamily.

It catalyses the reaction S-adenosyl-L-homocysteine + H2O = S-(5-deoxy-D-ribos-5-yl)-L-homocysteine + adenine. It carries out the reaction S-methyl-5'-thioadenosine + H2O = 5-(methylsulfanyl)-D-ribose + adenine. The enzyme catalyses 5'-deoxyadenosine + H2O = 5-deoxy-D-ribose + adenine. It functions in the pathway amino-acid biosynthesis; L-methionine biosynthesis via salvage pathway; S-methyl-5-thio-alpha-D-ribose 1-phosphate from S-methyl-5'-thioadenosine (hydrolase route): step 1/2. Catalyzes the irreversible cleavage of the glycosidic bond in both 5'-methylthioadenosine (MTA) and S-adenosylhomocysteine (SAH/AdoHcy) to adenine and the corresponding thioribose, 5'-methylthioribose and S-ribosylhomocysteine, respectively. Also cleaves 5'-deoxyadenosine, a toxic by-product of radical S-adenosylmethionine (SAM) enzymes, into 5-deoxyribose and adenine. This chain is 5'-methylthioadenosine/S-adenosylhomocysteine nucleosidase, found in Photobacterium profundum (strain SS9).